The chain runs to 206 residues: Uridine kinase (206 aa).

ATP is bound at residue 9 to 16 (GGSGSGKT).

The protein belongs to the uridine kinase family. Monomer.

The protein localises to the cytoplasm. It catalyses the reaction uridine + ATP = UMP + ADP + H(+). It carries out the reaction cytidine + ATP = CMP + ADP + H(+). Its pathway is pyrimidine metabolism; CTP biosynthesis via salvage pathway; CTP from cytidine: step 1/3. It participates in pyrimidine metabolism; UMP biosynthesis via salvage pathway; UMP from uridine: step 1/1. In Borreliella burgdorferi (strain ATCC 35210 / DSM 4680 / CIP 102532 / B31) (Borrelia burgdorferi), this protein is Uridine kinase (udk).